The following is a 1131-amino-acid chain: Topless-related protein 2 (1131 aa).

The LisH domain occupies 4 to 36 (LSRELVFLILQFLDEEKFKESVHKLEQESGFFF). A CTLH domain is found at 34–92 (FFFNIKYFEEKALAGEWDEVEKYLSGFTKVDDNRYSMKIFFEIRKQKYLEALDRNDRAK). The residue at position 214 (T214) is a Phosphothreonine. WD repeat units lie at residues 345–385 (RQGS…KVVT), 407–446 (EPSISVTRVAWSPDGNLLGVSFTKHLIHVYAYQGSDLRQH), 451–493 (AHVG…FTFE), 495–535 (HEAP…SRVD), 585–624 (FRKKSAGVVQFDTTRNRFLAVGEDNQIKFWNMDNTNLLTV), 629–668 (GGLPNLPRLRFNKDGNLLAVTTADNGFKILANTDGLRTLR), 763–802 (DSVSKVARLLYTNSGVGVLALGSNGVQRLWKWIRNEQNPT), 829–867 (NPEGSVPCIALSKNDSYVMSACGGKVSLFNMMTFKVMTT), 870–910 (PPPP…VKTK), 913–952 (GHQKHITGLAFSTALNILVSSGADAQLFFWTADSWEKKKS), 959–999 (PGKA…CIHK), and 1005–1044 (ALSSPITSASYSCNSQLVYASFADGNIAVFDAESLRLRCR). Positions 1099-1131 (VGVAAGSDKAGTENGRPSSSSAANNSSSDQIQR) are disordered. A compositionally biased stretch (low complexity) spans 1116–1131 (SSSSAANNSSSDQIQR).

In terms of assembly, tetramer. Interacts with NINJA/AFPH2. Interacts with SMXL6, SMXL7 and SMXL8. Interacts with SPL (via EAR motif). Interacts with SPEAR3/TIE1.

The protein resides in the nucleus. Its function is as follows. Transcriptional corepressor. Negative regulator of jasmonate responses. The polypeptide is Topless-related protein 2 (TPR2) (Arabidopsis thaliana (Mouse-ear cress)).